We begin with the raw amino-acid sequence, 244 residues long: Biosynthetic peptidoglycan transglycosylase (244 aa).

Residues 25 to 45 traverse the membrane as a helical segment; it reads LLLLLAIALLYQSWFLLHIIY.

Belongs to the glycosyltransferase 51 family.

The protein localises to the cell inner membrane. It catalyses the reaction [GlcNAc-(1-&gt;4)-Mur2Ac(oyl-L-Ala-gamma-D-Glu-L-Lys-D-Ala-D-Ala)](n)-di-trans,octa-cis-undecaprenyl diphosphate + beta-D-GlcNAc-(1-&gt;4)-Mur2Ac(oyl-L-Ala-gamma-D-Glu-L-Lys-D-Ala-D-Ala)-di-trans,octa-cis-undecaprenyl diphosphate = [GlcNAc-(1-&gt;4)-Mur2Ac(oyl-L-Ala-gamma-D-Glu-L-Lys-D-Ala-D-Ala)](n+1)-di-trans,octa-cis-undecaprenyl diphosphate + di-trans,octa-cis-undecaprenyl diphosphate + H(+). It participates in cell wall biogenesis; peptidoglycan biosynthesis. Peptidoglycan polymerase that catalyzes glycan chain elongation from lipid-linked precursors. The protein is Biosynthetic peptidoglycan transglycosylase of Nitrosomonas eutropha (strain DSM 101675 / C91 / Nm57).